Consider the following 98-residue polypeptide: NADH-ubiquinone oxidoreductase chain 4L (98 aa).

The next 3 membrane-spanning stretches (helical) occupy residues 1 to 21 (MSMVYINIFLAFTLSFMGLLI), 30 to 50 (LLCLEGMMLSLFVMMTITILI), and 61 to 81 (IILLVFAACEAALGLSLLVMI).

It belongs to the complex I subunit 4L family. Core subunit of respiratory chain NADH dehydrogenase (Complex I) which is composed of 45 different subunits.

It localises to the mitochondrion inner membrane. The enzyme catalyses a ubiquinone + NADH + 5 H(+)(in) = a ubiquinol + NAD(+) + 4 H(+)(out). Core subunit of the mitochondrial membrane respiratory chain NADH dehydrogenase (Complex I) which catalyzes electron transfer from NADH through the respiratory chain, using ubiquinone as an electron acceptor. Part of the enzyme membrane arm which is embedded in the lipid bilayer and involved in proton translocation. The polypeptide is NADH-ubiquinone oxidoreductase chain 4L (MT-ND4L) (Neovison vison (American mink)).